Here is a 254-residue protein sequence, read N- to C-terminus: 3-dehydroquinate dehydratase (254 aa).

3-dehydroquinate contacts are provided by residues 47 to 49 (EFR) and R83. The Proton donor/acceptor role is filled by H144. The active-site Schiff-base intermediate with substrate is the K171. 3-dehydroquinate is bound by residues R213, S232, and Q236.

The protein belongs to the type-I 3-dehydroquinase family. As to quaternary structure, homodimer.

It catalyses the reaction 3-dehydroquinate = 3-dehydroshikimate + H2O. It functions in the pathway metabolic intermediate biosynthesis; chorismate biosynthesis; chorismate from D-erythrose 4-phosphate and phosphoenolpyruvate: step 3/7. Involved in the third step of the chorismate pathway, which leads to the biosynthesis of aromatic amino acids. Catalyzes the cis-dehydration of 3-dehydroquinate (DHQ) and introduces the first double bond of the aromatic ring to yield 3-dehydroshikimate. The sequence is that of 3-dehydroquinate dehydratase from Neisseria meningitidis serogroup C / serotype 2a (strain ATCC 700532 / DSM 15464 / FAM18).